A 202-amino-acid chain; its full sequence is Hypoxanthine-guanine phosphoribosyltransferase (202 aa).

Diphosphate contacts are provided by lysine 66 and glycine 67. Positions 122 and 123 each coordinate Mg(2+). The active-site Proton acceptor is the aspartate 126. GMP-binding positions include lysine 154, 175 to 176 (FV), and aspartate 182. Arginine 188 is a diphosphate binding site.

It belongs to the purine/pyrimidine phosphoribosyltransferase family. As to quaternary structure, homodimer and homotetramer in equilibrium. The presence or absence of divalent metal ions, as well as phosphate, can affect the oligomerization state of the enzyme. Likely functions as a tetramer (rather than a dimer) in its biological environment, which is the most active form. The dimeric structure is also active though ~50% of that of the tetramer. Mg(2+) serves as cofactor.

Its subcellular location is the cytoplasm. It catalyses the reaction IMP + diphosphate = hypoxanthine + 5-phospho-alpha-D-ribose 1-diphosphate. The enzyme catalyses GMP + diphosphate = guanine + 5-phospho-alpha-D-ribose 1-diphosphate. It participates in purine metabolism; IMP biosynthesis via salvage pathway; IMP from hypoxanthine: step 1/1. It functions in the pathway purine metabolism; GMP biosynthesis via salvage pathway; GMP from guanine: step 1/1. Competitively inhibited by acyclic nucleoside phosphonates (ANPs) with Ki values as low as 0.69 uM. Prodrugs of these compounds arrest the growth of a virulent strain of M.tuberculosis with MIC50 values as low as 4.5 uM and possess low cytotoxicity in mammalian cells. Inhibited by pyrrolidine nucleoside bisphosphonates, which are also able to arrest the growth of virulent M.tuberculosis not only in its replicating phase but also in its latent phase, and to arrest the growth of M.tuberculosis in infected macrophages while having low cytotoxicity in mammalian cells. Functionally, purine salvage pathway enzyme that catalyzes the transfer of the ribosyl-5-phosphate group from 5-phospho-alpha-D-ribose 1-diphosphate (PRPP) to the N9 position of the 6-oxopurines hypoxanthine and guanine to form the corresponding ribonucleotides IMP (inosine 5'-monophosphate) and GMP (guanosine 5'-monophosphate), with the release of PPi. Thus, specifically recycles hypoxanthine and guanine imported from the external medium, and converts them to IMP and GMP, respectively. Cannot use xanthine as substrate. This is Hypoxanthine-guanine phosphoribosyltransferase from Mycobacterium tuberculosis (strain ATCC 25618 / H37Rv).